The primary structure comprises 91 residues: MFCVIYRSPQRDQTYLYVEKKDDFSRVPEALLKGFGKPKLAMILPLDGSKKLVGADIKKVKTALREEGFYLQLPPPLESLLKIHLSDANKV.

Residues 1–85 enclose the YcgL domain; that stretch reads MFCVIYRSPQ…PLESLLKIHL (85 aa).

This chain is YcgL domain-containing protein ETA_15380, found in Erwinia tasmaniensis (strain DSM 17950 / CFBP 7177 / CIP 109463 / NCPPB 4357 / Et1/99).